The chain runs to 648 residues: Serine/threonine-protein kinase PrkC (648 aa).

The Cytoplasmic portion of the chain corresponds to 1–330 (MLIGKRISGR…KKNGKRKKWP (330 aa)). The Protein kinase domain occupies 11-271 (YQILRVIGGG…DMEADIKTAF (261 aa)). ATP is bound by residues 17–25 (IGGGGMANV) and Lys-40. Catalysis depends on Asp-134, which acts as the Proton acceptor. Thr-162, Thr-163, Thr-165, and Thr-167 each carry phosphothreonine; by autocatalysis. A Phosphoserine; by autocatalysis modification is found at Ser-214. Phosphothreonine; by autocatalysis occurs at positions 290, 313, and 320. A helical membrane pass occupies residues 331 to 351 (WVLLTICLVFITAGILAVTVF). Topologically, residues 352–648 (PSLFMPKDVK…YKTIEYPKDE (297 aa)) are extracellular. 3 PASTA domains span residues 356–424 (MPKD…YKST), 425–492 (GKAK…TVSI), and 493–559 (GPED…TFSL).

The protein belongs to the protein kinase superfamily. Ser/Thr protein kinase family. In terms of assembly, homodimer. Autophosphorylation on threonine residue(s) and serine residue considerably increases the kinase activity of the protein. Dephosphorylated in vitro by PrpC.

It localises to the spore membrane. The catalysed reaction is L-seryl-[protein] + ATP = O-phospho-L-seryl-[protein] + ADP + H(+). It carries out the reaction L-threonyl-[protein] + ATP = O-phospho-L-threonyl-[protein] + ADP + H(+). With respect to regulation, bryostatin activates PrkC activity and induces germination, whereas staurosporine inhibits PrkC and significantly reduced peptidoglycan-dependent germination. Kinase activity of isolated N-terminus stimulated by poly-L-lysine or myelin basic protein. Its function is as follows. Protein kinase that is responsible for triggering spore germination in response to muropeptides, signaling bacteria to exit dormancy. PrkC is thus a germination receptor that binds peptidoglycan fragments containing m-Dpm (meso-diaminopimelate), which act as spore germinants. Autophosphorylates and phosphorylates EF-G (elongation factor G, fusA); the latter modification is likely necessary for germination in response to peptidoglycan. Another group did not detect phosphorylation of EF-G. PrkC is a substrate in vitro of the cotranscribed phosphatase PrpC, which suggests that they form a functional couple in vivo. Might also be involved in sporulation and biofilm formation. Does not seem to be involved in stress response. In Bacillus subtilis (strain 168), this protein is Serine/threonine-protein kinase PrkC (prkC).